The following is a 410-amino-acid chain: NADH-quinone oxidoreductase subunit D (410 aa).

Belongs to the complex I 49 kDa subunit family. As to quaternary structure, NDH-1 is composed of 14 different subunits. Subunits NuoB, C, D, E, F, and G constitute the peripheral sector of the complex.

Its subcellular location is the cell inner membrane. It carries out the reaction a quinone + NADH + 5 H(+)(in) = a quinol + NAD(+) + 4 H(+)(out). Functionally, NDH-1 shuttles electrons from NADH, via FMN and iron-sulfur (Fe-S) centers, to quinones in the respiratory chain. The immediate electron acceptor for the enzyme in this species is believed to be ubiquinone. Couples the redox reaction to proton translocation (for every two electrons transferred, four hydrogen ions are translocated across the cytoplasmic membrane), and thus conserves the redox energy in a proton gradient. The polypeptide is NADH-quinone oxidoreductase subunit D (Nitratiruptor sp. (strain SB155-2)).